Here is a 270-residue protein sequence, read N- to C-terminus: Acyl-[acyl-carrier-protein]--UDP-N-acetylglucosamine O-acyltransferase (270 aa).

It belongs to the transferase hexapeptide repeat family. LpxA subfamily. In terms of assembly, homotrimer.

The protein localises to the cytoplasm. The enzyme catalyses a (3R)-hydroxyacyl-[ACP] + UDP-N-acetyl-alpha-D-glucosamine = a UDP-3-O-[(3R)-3-hydroxyacyl]-N-acetyl-alpha-D-glucosamine + holo-[ACP]. Its pathway is glycolipid biosynthesis; lipid IV(A) biosynthesis; lipid IV(A) from (3R)-3-hydroxytetradecanoyl-[acyl-carrier-protein] and UDP-N-acetyl-alpha-D-glucosamine: step 1/6. In terms of biological role, involved in the biosynthesis of lipid A, a phosphorylated glycolipid that anchors the lipopolysaccharide to the outer membrane of the cell. The chain is Acyl-[acyl-carrier-protein]--UDP-N-acetylglucosamine O-acyltransferase from Helicobacter acinonychis (strain Sheeba).